The sequence spans 428 residues: Histidinol dehydrogenase (428 aa).

Residues Tyr126, Gln188, and Asn211 each coordinate NAD(+). Substrate-binding residues include Ser234, Gln256, and His259. The Zn(2+) site is built by Gln256 and His259. Catalysis depends on proton acceptor residues Glu324 and His325. His325, Asp358, Glu412, and His417 together coordinate substrate. Asp358 lines the Zn(2+) pocket. His417 is a binding site for Zn(2+).

It belongs to the histidinol dehydrogenase family. The cofactor is Zn(2+).

It carries out the reaction L-histidinol + 2 NAD(+) + H2O = L-histidine + 2 NADH + 3 H(+). It participates in amino-acid biosynthesis; L-histidine biosynthesis; L-histidine from 5-phospho-alpha-D-ribose 1-diphosphate: step 9/9. Functionally, catalyzes the sequential NAD-dependent oxidations of L-histidinol to L-histidinaldehyde and then to L-histidine. This is Histidinol dehydrogenase from Chlorobium chlorochromatii (strain CaD3).